Here is a 675-residue protein sequence, read N- to C-terminus: DNA ligase (675 aa).

NAD(+) is bound by residues 43–47, 92–93, and E122; these read DYEYD and SM. The active-site N6-AMP-lysine intermediate is the K124. NAD(+) contacts are provided by R145, E179, K295, and K319. Zn(2+) contacts are provided by C413, C416, C431, and C436. The region spanning 597–675 is the BRCT domain; that stretch reads SPDGYYKGKK…ETEAIAKFEQ (79 aa).

Belongs to the NAD-dependent DNA ligase family. LigA subfamily. Mg(2+) is required as a cofactor. The cofactor is Mn(2+).

The catalysed reaction is NAD(+) + (deoxyribonucleotide)n-3'-hydroxyl + 5'-phospho-(deoxyribonucleotide)m = (deoxyribonucleotide)n+m + AMP + beta-nicotinamide D-nucleotide.. Its function is as follows. DNA ligase that catalyzes the formation of phosphodiester linkages between 5'-phosphoryl and 3'-hydroxyl groups in double-stranded DNA using NAD as a coenzyme and as the energy source for the reaction. It is essential for DNA replication and repair of damaged DNA. The chain is DNA ligase from Pediococcus pentosaceus (strain ATCC 25745 / CCUG 21536 / LMG 10740 / 183-1w).